Consider the following 140-residue polypeptide: Endoribonuclease YbeY (140 aa).

Positions 100, 104, and 110 each coordinate Zn(2+).

It belongs to the endoribonuclease YbeY family. Zn(2+) serves as cofactor.

Its subcellular location is the cytoplasm. In terms of biological role, single strand-specific metallo-endoribonuclease involved in late-stage 70S ribosome quality control and in maturation of the 3' terminus of the 16S rRNA. The chain is Endoribonuclease YbeY from Helicobacter pylori (strain P12).